The following is a 38-amino-acid chain: MKVRSSVKKRSPDDIIVRRKGRVYIINKKNRRHNQRQG.

The protein belongs to the bacterial ribosomal protein bL36 family.

The polypeptide is Large ribosomal subunit protein bL36 (Phytoplasma mali (strain AT)).